A 1470-amino-acid polypeptide reads, in one-letter code: Transient receptor potential cation channel subfamily M member 2 (1470 aa).

Topologically, residues 1–725 (MDEAALEPTL…GELSVDNPHW (725 aa)) are cytoplasmic. Residues Tyr-267, Arg-274, 305–308 (GPGT), and Arg-330 contribute to the ADP-D-ribose site. Residues 726 to 738 (KVLLCMIFFPLIY) lie within the membrane without spanning it. At 739–808 (TGFLTFRRDE…MSFLKSPQVK (70 aa)) the chain is on the cytoplasmic side. A helical transmembrane segment spans residues 809 to 829 (FYWNIASYFGFLWLFAVVLMI). Over 830–836 (DFQTSPS) the chain is Extracellular. A helical transmembrane segment spans residues 837-857 (WRELLLYVWLTSLVCEEIRQL). Ca(2+) contacts are provided by Glu-853 and Gln-856. Over 858 to 876 (YHDFDGSGFRRKAKMYIKD) the chain is Cytoplasmic. A helical transmembrane segment spans residues 877-897 (LWNILDVLSIVLFIAGLICRL). A Ca(2+)-binding site is contributed by Asn-879. The Extracellular segment spans residues 898–905 (QASDTVFY). Residues 906–926 (IGKVILCIDFIIFCLRLMAIF) traverse the membrane as a helical segment. Residues 927-941 (SISRTLGPKIIIVRR) are Cytoplasmic-facing. Residues 942-968 (MMLDLFFFMFLLSIWVVAYGVAKQGIL) form a helical membrane-spanning segment. The Extracellular segment spans residues 969 to 977 (IENEERLNW). The pore-forming intramembrane region spans 978-1002 (IIRGAVYEPYITIFGNFPTNIDNTL). The short motif at 991 to 993 (FGN) is the Selectivity filter element. Over 1003–1034 (FDISSCSVNASDPLKPKCPMLNADNTPVFPEW) the chain is Extracellular. The cysteines at positions 1008 and 1020 are disulfide-linked. N-linked (GlcNAc...) asparagine glycosylation is present at Asn-1011. A helical transmembrane segment spans residues 1035 to 1059 (LTIMMLCVYLLFANILLLNLLIAIF). At 1060–1087 (NYTFQEVQDNTDTIWKFQRYELIKEYHS) the chain is on the cytoplasmic side. Glu-1084 is a Ca(2+) binding site. Residues 1088–1105 (RPALPPPFILLSHLILFI) lie within the membrane without spanning it. Topologically, residues 1106 to 1470 (RGVFLRDLPQ…QIAHHHNTYF (365 aa)) are cytoplasmic. The tract at residues 1157 to 1470 (HRIHDTAEKV…QIAHHHNTYF (314 aa)) is divergent Nudix hydrolase-like domain. 2 disordered regions span residues 1215-1256 (KSKV…LQYP) and 1281-1314 (PPVY…GKGA). The segment covering 1231–1244 (DDGDSSGQETDDEE) has biased composition (acidic residues). The segment covering 1283 to 1295 (VYNQQDSSESDTS) has biased composition (polar residues). ADP-D-ribose-binding residues include Asp-1398 and Arg-1400.

Belongs to the transient receptor (TC 1.A.4) family. LTrpC subfamily. TRPM2 sub-subfamily. As to quaternary structure, homotetramer.

The protein localises to the cell membrane. It catalyses the reaction Ca(2+)(in) = Ca(2+)(out). The catalysed reaction is Na(+)(in) = Na(+)(out). Activated by intracellular ADP-ribose. Ca(2+) and PI(4,5)P2 are required for channel opening by ADP-ribose. In terms of biological role, nonselective, voltage-independent cation channel that mediates Ca(2+) influx, leading to increased cytoplasmic Ca(2+) levels. Functions as a ligand-gated ion channel, gated by intracellular adenosine diphosphate ribose (ADP-ribose), Ca(2+), warm temperature, and oxidative stress. Binding of ADP-ribose to the cytoplasmic N-terminal region causes a conformation change; the channel is primed but still requires Ca(2+) binding to trigger channel opening. The polypeptide is Transient receptor potential cation channel subfamily M member 2 (Danio rerio (Zebrafish)).